Here is a 427-residue protein sequence, read N- to C-terminus: Enolase (427 aa).

Gln163 lines the (2R)-2-phosphoglycerate pocket. The active-site Proton donor is Glu205. Positions 242, 285, and 312 each coordinate Mg(2+). Positions 337, 366, 367, and 388 each coordinate (2R)-2-phosphoglycerate. The Proton acceptor role is filled by Lys337.

The protein belongs to the enolase family. It depends on Mg(2+) as a cofactor.

The protein localises to the cytoplasm. Its subcellular location is the secreted. The protein resides in the cell surface. The catalysed reaction is (2R)-2-phosphoglycerate = phosphoenolpyruvate + H2O. Its pathway is carbohydrate degradation; glycolysis; pyruvate from D-glyceraldehyde 3-phosphate: step 4/5. In terms of biological role, catalyzes the reversible conversion of 2-phosphoglycerate (2-PG) into phosphoenolpyruvate (PEP). It is essential for the degradation of carbohydrates via glycolysis. The chain is Enolase from Nitrosospira multiformis (strain ATCC 25196 / NCIMB 11849 / C 71).